We begin with the raw amino-acid sequence, 30 residues long: Basic phospholipase A2 CM-I (30 aa).

Belongs to the phospholipase A2 family. Group I subfamily. Requires Ca(2+) as cofactor. Expressed by the venom gland.

The protein localises to the secreted. The enzyme catalyses a 1,2-diacyl-sn-glycero-3-phosphocholine + H2O = a 1-acyl-sn-glycero-3-phosphocholine + a fatty acid + H(+). Snake venom phospholipase A2 (PLA2) that shows weak anticoagulant activity. Is more catalytically active than the strong anticoagulant protein CM-IV found in this venom. Acts by inhibiting the complex composed of tissue factor (F3) and coagulation factor VIIa (F7) (TF-VIIa complex) by only enzymatic mechanism. PLA2 catalyzes the calcium-dependent hydrolysis of the 2-acyl groups in 3-sn-phosphoglycerides. This is Basic phospholipase A2 CM-I from Naja nigricollis (Black-necked spitting cobra).